We begin with the raw amino-acid sequence, 131 residues long: Large ribosomal subunit protein bL12 (131 aa).

Belongs to the bacterial ribosomal protein bL12 family. In terms of assembly, homodimer. Part of the ribosomal stalk of the 50S ribosomal subunit. Forms a multimeric L10(L12)X complex, where L10 forms an elongated spine to which 2 to 4 L12 dimers bind in a sequential fashion. Binds GTP-bound translation factors.

Functionally, forms part of the ribosomal stalk which helps the ribosome interact with GTP-bound translation factors. Is thus essential for accurate translation. The chain is Large ribosomal subunit protein bL12 from Prochlorococcus marinus (strain MIT 9215).